Reading from the N-terminus, the 511-residue chain is Glucans biosynthesis protein G (511 aa).

The first 22 residues, 1 to 22 (MMKMRWLSAAVMLTLYTSSSWA), serve as a signal peptide directing secretion.

It belongs to the OpgD/OpgG family.

Its subcellular location is the periplasm. It functions in the pathway glycan metabolism; osmoregulated periplasmic glucan (OPG) biosynthesis. Involved in the biosynthesis of osmoregulated periplasmic glucans (OPGs). The polypeptide is Glucans biosynthesis protein G (Escherichia fergusonii (strain ATCC 35469 / DSM 13698 / CCUG 18766 / IAM 14443 / JCM 21226 / LMG 7866 / NBRC 102419 / NCTC 12128 / CDC 0568-73)).